Reading from the N-terminus, the 477-residue chain is Aspartyl/glutamyl-tRNA(Asn/Gln) amidotransferase subunit B (477 aa).

The protein belongs to the GatB/GatE family. GatB subfamily. As to quaternary structure, heterotrimer of A, B and C subunits.

The enzyme catalyses L-glutamyl-tRNA(Gln) + L-glutamine + ATP + H2O = L-glutaminyl-tRNA(Gln) + L-glutamate + ADP + phosphate + H(+). It carries out the reaction L-aspartyl-tRNA(Asn) + L-glutamine + ATP + H2O = L-asparaginyl-tRNA(Asn) + L-glutamate + ADP + phosphate + 2 H(+). Its function is as follows. Allows the formation of correctly charged Asn-tRNA(Asn) or Gln-tRNA(Gln) through the transamidation of misacylated Asp-tRNA(Asn) or Glu-tRNA(Gln) in organisms which lack either or both of asparaginyl-tRNA or glutaminyl-tRNA synthetases. The reaction takes place in the presence of glutamine and ATP through an activated phospho-Asp-tRNA(Asn) or phospho-Glu-tRNA(Gln). The protein is Aspartyl/glutamyl-tRNA(Asn/Gln) amidotransferase subunit B of Lactococcus lactis subsp. cremoris (strain MG1363).